Here is an 860-residue protein sequence, read N- to C-terminus: Serine/threonine-protein kinase greatwall (860 aa).

Positions 23–816 constitute a Protein kinase domain; the sequence is FVLVKPISRG…LKELKDHPFF (794 aa). ATP is bound by residues 29–37 and lysine 52; that span reads ISRGAFGKV. The active-site Proton acceptor is the aspartate 146. Positions 514–537 are disordered; it reads QGEEGGKAEPNSSSSTSPGDERNI. Threonine 722 is modified (phosphothreonine; by CDK1). Positions 817 to 860 constitute an AGC-kinase C-terminal domain; the sequence is DGVDWENLHHQTMPFIPQPDNETDTSYFEARNTAQHLTVSGFSL.

Belongs to the protein kinase superfamily. AGC Ser/Thr protein kinase family. Post-translationally, phosphorylation at Thr-722 by CDK1 during M phase activates its kinase activity. Maximum phosphorylation occurs in prometaphase.

It is found in the cytoplasm. It localises to the cytoskeleton. The protein localises to the microtubule organizing center. Its subcellular location is the centrosome. The protein resides in the nucleus. It is found in the cleavage furrow. The catalysed reaction is L-seryl-[protein] + ATP = O-phospho-L-seryl-[protein] + ADP + H(+). The enzyme catalyses L-threonyl-[protein] + ATP = O-phospho-L-threonyl-[protein] + ADP + H(+). Serine/threonine kinase that plays a key role in M phase by acting as a regulator of mitosis entry and maintenance. Acts by promoting the inactivation of protein phosphatase 2A (PP2A) during M phase: does not directly inhibit PP2A but acts by mediating phosphorylation and subsequent activation of arpp19 and ensa at 'Ser-62' and 'Ser-74', respectively. ARPP19 and ENSA are phosphatase inhibitors that specifically inhibit the ppp2r2d (PR55-delta) subunit of PP2A. Inactivation of PP2A during M phase is essential to keep cyclin-B1-CDK1 activity high. Following DNA damage, it is also involved in checkpoint recovery by being inhibited. May be involved in megakaryocyte differentiation. This is Serine/threonine-protein kinase greatwall (mastl) from Danio rerio (Zebrafish).